The sequence spans 88 residues: MLNTKFDELMEFPCAFPFKVVGDAHEALTDRVVAVVQRHAPGDYSPTVKASSKGSYYSVTIRVTVTSKDHIETLYTELAGIEGVRRVL.

It belongs to the UPF0250 family.

This chain is UPF0250 protein Shewmr4_0986, found in Shewanella sp. (strain MR-4).